The primary structure comprises 127 residues: Glycine cleavage system H protein (127 aa).

Residues 24 to 106 (TATIGITDYA…YAEGWMLKLK (83 aa)) enclose the Lipoyl-binding domain. K65 is modified (N6-lipoyllysine).

It belongs to the GcvH family. In terms of assembly, the glycine cleavage system is composed of four proteins: P, T, L and H. The cofactor is (R)-lipoate.

Its function is as follows. The glycine cleavage system catalyzes the degradation of glycine. The H protein shuttles the methylamine group of glycine from the P protein to the T protein. The chain is Glycine cleavage system H protein from Opitutus terrae (strain DSM 11246 / JCM 15787 / PB90-1).